Reading from the N-terminus, the 311-residue chain is D-alanine--D-alanine ligase (311 aa).

Residues 106–301 (KLLWRGAELP…FDELCWRILL (196 aa)) enclose the ATP-grasp domain. Position 132 to 187 (132 to 187 (IGSVGLPLMIKPAHEGSSIGMAKVERPEELEAARAEAARYDDLVLAERWIEGGEYT)) interacts with ATP. Mg(2+) is bound by residues D255, E268, and N270.

It belongs to the D-alanine--D-alanine ligase family. It depends on Mg(2+) as a cofactor. The cofactor is Mn(2+).

It localises to the cytoplasm. It carries out the reaction 2 D-alanine + ATP = D-alanyl-D-alanine + ADP + phosphate + H(+). Its pathway is cell wall biogenesis; peptidoglycan biosynthesis. Functionally, cell wall formation. This chain is D-alanine--D-alanine ligase, found in Alkalilimnicola ehrlichii (strain ATCC BAA-1101 / DSM 17681 / MLHE-1).